Here is a 403-residue protein sequence, read N- to C-terminus: MSKFNRMHLIVLDSVGIGAAPDANNFVNAGVPDGASDTLGHISKTVGLNVPNMAKLGLGNIPREQPLKTVPAESNPTGYATKLEEVSLGKDTMTGHWEIMGLNITEPFDTFWNGFPEEILTQIEEFSGRKVIREANKPYSGTAVIDDFGPRQMETGELIIYTSADPVLQIAAHEDIIPVEELYRICEFARSITLERPALLGRIIARPYVGEPGNFTRTSNRRDLAISPFAPTVLDKLNEAGIDTYSVGKISDIFNGEGINHDMGHNKSNNHGVDNLIKAMTSEDFKHGFSFTNLVDFDALYGHRRNPQGYRDCLHEFDERLPEIIAAMKEDDLLMITADHGNDPTYAGTDHTREYIPFLAYSPSFKCSGLIPVGHFADISATIADNFGVEKAMIGESFLDKLV.

Mn(2+) is bound by residues Asp13, Asp298, His303, Asp339, His340, and His351.

It belongs to the phosphopentomutase family. The cofactor is Mn(2+).

It localises to the cytoplasm. It catalyses the reaction 2-deoxy-alpha-D-ribose 1-phosphate = 2-deoxy-D-ribose 5-phosphate. The catalysed reaction is alpha-D-ribose 1-phosphate = D-ribose 5-phosphate. The protein operates within carbohydrate degradation; 2-deoxy-D-ribose 1-phosphate degradation; D-glyceraldehyde 3-phosphate and acetaldehyde from 2-deoxy-alpha-D-ribose 1-phosphate: step 1/2. Its function is as follows. Isomerase that catalyzes the conversion of deoxy-ribose 1-phosphate (dRib-1-P) and ribose 1-phosphate (Rib-1-P) to deoxy-ribose 5-phosphate (dRib-5-P) and ribose 5-phosphate (Rib-5-P), respectively. The sequence is that of Phosphopentomutase from Streptococcus thermophilus (strain ATCC BAA-250 / LMG 18311).